Reading from the N-terminus, the 260-residue chain is Indole-3-glycerol phosphate synthase (260 aa).

The protein belongs to the TrpC family.

It carries out the reaction 1-(2-carboxyphenylamino)-1-deoxy-D-ribulose 5-phosphate + H(+) = (1S,2R)-1-C-(indol-3-yl)glycerol 3-phosphate + CO2 + H2O. The protein operates within amino-acid biosynthesis; L-tryptophan biosynthesis; L-tryptophan from chorismate: step 4/5. This Lactiplantibacillus plantarum (strain ATCC BAA-793 / NCIMB 8826 / WCFS1) (Lactobacillus plantarum) protein is Indole-3-glycerol phosphate synthase.